A 538-amino-acid polypeptide reads, in one-letter code: BTB/POZ domain-containing protein 6 (538 aa).

An N-terminal signal peptide occupies residues 1 to 17; it reads MLLPLACLHGRVAQCLT. Disordered regions lie at residues 29–53 and 76–115; these read PRRG…PPAK and AAVG…SPGW. Residues 35–53 show a composition bias toward low complexity; the sequence is ARGAASTGAEAAPAAPPAK. Residues 85-103 are compositionally biased toward pro residues; that stretch reads RSPPSAPAPAPPPPAPAPP. The region spanning 136 to 206 is the BTB domain; it reads ADVHFVVGPP…MYSDEIDLEA (71 aa).

Expressed in lens.

It is found in the cytoplasm. Adapter protein for the cul3 E3 ubiquitin-protein ligase complex. Involved in late neuronal development and muscle formation. This Homo sapiens (Human) protein is BTB/POZ domain-containing protein 6.